The chain runs to 237 residues: tRNA (guanine-N(1)-)-methyltransferase (237 aa).

Residues G113 and 133–138 (MGDYIL) each bind S-adenosyl-L-methionine.

It belongs to the RNA methyltransferase TrmD family. As to quaternary structure, homodimer.

Its subcellular location is the cytoplasm. The enzyme catalyses guanosine(37) in tRNA + S-adenosyl-L-methionine = N(1)-methylguanosine(37) in tRNA + S-adenosyl-L-homocysteine + H(+). Specifically methylates guanosine-37 in various tRNAs. This Wolinella succinogenes (strain ATCC 29543 / DSM 1740 / CCUG 13145 / JCM 31913 / LMG 7466 / NCTC 11488 / FDC 602W) (Vibrio succinogenes) protein is tRNA (guanine-N(1)-)-methyltransferase.